The sequence spans 288 residues: AA9 family lytic polysaccharide monooxygenase A (288 aa).

Residues Met1 to Gly22 form the signal peptide. Cu(2+) is bound by residues His21 and His104. Cystine bridges form between Cys74-Cys191 and Cys115-Cys119. An N-linked (GlcNAc...) asparagine glycan is attached at Asn151. O2 is bound by residues His177 and Gln186. A Cu(2+)-binding site is contributed by Tyr188. A disordered region spans residues Pro236–Ala270. The span at Ala249–Ala270 shows a compositional bias: low complexity.

This sequence belongs to the polysaccharide monooxygenase AA9 family. It depends on Cu(2+) as a cofactor.

It localises to the secreted. The catalysed reaction is [(1-&gt;4)-beta-D-glucosyl]n+m + reduced acceptor + O2 = 4-dehydro-beta-D-glucosyl-[(1-&gt;4)-beta-D-glucosyl]n-1 + [(1-&gt;4)-beta-D-glucosyl]m + acceptor + H2O.. In terms of biological role, lytic polysaccharide monooxygenase (LPMO) that depolymerizes crystalline and amorphous polysaccharides via the oxidation of scissile alpha- or beta-(1-4)-glycosidic bonds, yielding C1 and C4 oxidation products. Catalysis by LPMOs requires the reduction of the active-site copper from Cu(II) to Cu(I) by a reducing agent and H(2)O(2) or O(2) as a cosubstrate. Active on cellulose and on xyloglucan for deconstruction of plant biomass. This chain is AA9 family lytic polysaccharide monooxygenase A, found in Geotrichum candidum (Oospora lactis).